Reading from the N-terminus, the 577-residue chain is Moesin (577 aa).

The region spanning Pro2 to Arg295 is the FERM domain. A Phosphoserine modification is found at Ser74. Residue Lys79 is modified to N6-acetyllysine. Lys83 is subject to N6-succinyllysine. The [IL]-x-C-x-x-[DE] motif motif lies at Ile115 to Glu120. Position 116 is a phosphotyrosine (Tyr116). Cys117 bears the S-nitrosocysteine mark. 2 positions are modified to N6-acetyllysine: Lys139 and Lys165. Disordered stretches follow at residues Leu322–Arg342, Thr358–Ser419, and Ser468–Val518. Residues Thr358–Glu401 show a composition bias toward basic and acidic residues. Ser407 carries the post-translational modification Phosphoserine. A compositionally biased stretch (basic and acidic residues) spans Ala492–Val518. Residue Ser527 is modified to Phosphoserine. Thr558 carries the phosphothreonine; by ROCK2 and STK10 modification.

As to quaternary structure, in resting T-cells, part of a PAG1-NHERF1-MSN complex which is disrupted upon TCR activation. Interacts with NHERF1. Interacts with PPP1R16B. Interacts with SELPLG and SYK; these interactions mediate the activation of SYK by SELPLG. Interacts with PDPN (via cytoplasmic domain); this interaction activates RHOA and promotes epithelial-mesenchymal transition. Interacts with SPN/CD43 cytoplasmic tail. Interacts with CD44. Interacts with ICAM2. Interacts with ICAM3 (via C-terminus). Interacts with PDZD8. Interacts with F-actin. Interacts with CD46. Interacts with PTPN6. Phosphorylation on Thr-558 by STK10 negatively regulates lymphocyte migration and polarization. Phosphorylation on Thr-558 is crucial for the formation of microvilli-like structures. Phosphorylation by ROCK2 suppresses the head-to-tail association of the N-terminal and C-terminal halves resulting in an opened conformation which is capable of actin and membrane-binding. Post-translationally, S-nitrosylation of Cys-117 is induced by interferon-gamma and oxidatively-modified low-densitity lipoprotein (LDL(ox)) implicating the iNOS-S100A8/9 transnitrosylase complex.

Its subcellular location is the cell membrane. It is found in the cytoplasm. The protein localises to the cytoskeleton. The protein resides in the apical cell membrane. It localises to the cell projection. Its subcellular location is the microvillus membrane. It is found in the microvillus. Ezrin-radixin-moesin (ERM) family protein that connects the actin cytoskeleton to the plasma membrane and thereby regulates the structure and function of specific domains of the cell cortex. Tethers actin filaments by oscillating between a resting and an activated state providing transient interactions between moesin and the actin cytoskeleton. Once phosphorylated on its C-terminal threonine, moesin is activated leading to interaction with F-actin and cytoskeletal rearrangement. These rearrangements regulate many cellular processes, including cell shape determination, membrane transport, and signal transduction. The role of moesin is particularly important in immunity acting on both T and B-cells homeostasis and self-tolerance, regulating lymphocyte egress from lymphoid organs. Modulates phagolysosomal biogenesis in macrophages. Also participates in immunologic synapse formation. This chain is Moesin, found in Mus musculus (Mouse).